The primary structure comprises 207 residues: Large ribosomal subunit protein bL25 (207 aa).

Belongs to the bacterial ribosomal protein bL25 family. CTC subfamily. In terms of assembly, part of the 50S ribosomal subunit; part of the 5S rRNA/L5/L18/L25 subcomplex. Contacts the 5S rRNA. Binds to the 5S rRNA independently of L5 and L18.

In terms of biological role, this is one of the proteins that binds to the 5S RNA in the ribosome where it forms part of the central protuberance. The polypeptide is Large ribosomal subunit protein bL25 (Paraburkholderia xenovorans (strain LB400)).